The sequence spans 256 residues: MYASKYKRGSSNYQRRGYSRYQGFRRTAIVTRHDGKRRQHQSNKSNEDPKMLVQCIRENQFGPDFVMSHNTAISTFINYPQLGKIEPNRCRSYIKLKRLRFKGTVKIERMHTDVNMDGLSPKIEGVFSIVIVVDRKPHLSPSGCLHTFDELFGARINSHGNLAVMPSLKDRFYIRHLLKRVLSVDKDTTMIDVEGSTLLSNKRYNMWSTFNDFDHDSCNGVYANIAKNALLVYYCWMSDIMSKASTFVSYDLDYVG.

Positions 21–42 (YQGFRRTAIVTRHDGKRRQHQS) match the Bipartite nuclear localization signal motif. A Nuclear localization signal motif is present at residues 81 to 96 (QLGKIEPNRCRSYIKL). An interaction with Arabidopsis thaliana NSI protein region spans residues 150–187 (ELFGARINSHGNLAVMPSLKDRFYIRHLLKRVLSVDKD).

Belongs to the begomovirus nuclear shuttle protein family. In terms of assembly, binds to single-stranded and double-stranded viral DNA. Interacts with the host nuclear shuttle interacting (NSI) protein. This interaction may allow NSP to recruit NSI monomers to the viral genome and thus regulate nuclear export of viral genome by NSP.

It localises to the host nucleus. The protein resides in the host cytoplasm. Its subcellular location is the host cell membrane. Its function is as follows. Binds to the genomic viral ssDNA, shuttles it into and out of the cell nucleus. Begomoviruses use 2 proteins to transport their DNA from cell to cell. The nuclear shuttle protein (NSP) shuttles it between nucleus and cytoplasm and the movement protein (MP) probably transports the DNA-NSP complex to the cell periphery and facilitates movement across the cell wall. The chain is Nuclear shuttle protein from Macroptilium lathyroides (Lima bean).